Here is an 872-residue protein sequence, read N- to C-terminus: Potassium voltage-gated channel subfamily KQT member 3 (872 aa).

The tract at residues 1-43 (MGLKARRAAGAAGGGGDGGGGGGGAANPAGGDAAAAGDEERKV) is disordered. The Cytoplasmic segment spans residues 1 to 120 (MGLKARRAAG…IYDALERPRG (120 aa)). The span at 11-25 (AAGGGGDGGGGGGGA) shows a compositional bias: gly residues. Residues 26–36 (ANPAGGDAAAA) show a composition bias toward low complexity. At Thr-81 the chain carries Phosphothreonine. The helical transmembrane segment at 121–143 (WALLYHALVFLIVLGCLILAVLT) threads the bilayer. Topologically, residues 144–153 (TFKEYETVSG) are extracellular. Residues 154–175 (DWLLLLETFAIFIFGAEFALRI) traverse the membrane as a helical segment. Residues 176 to 193 (WAAGCCCRYKGWRGRLKF) are Cytoplasmic-facing. The helical transmembrane segment at 194–213 (ARKPLCMLDIFVLIASVPVV) threads the bilayer. The Extracellular portion of the chain corresponds to 214 to 225 (AVGNQGNVLATS). The chain crosses the membrane as a helical; Voltage-sensor span at residues 226–244 (LRSLRFLQILRMLRMDRRG). Arg-243 is a binding site for a 1,2-diacyl-sn-glycero-3-phospho-(1D-myo-inositol-4,5-bisphosphate). The Cytoplasmic segment spans residues 245 to 256 (GTWKLLGSAICA). Phosphothreonine is present on Thr-246. A helical membrane pass occupies residues 257–282 (HSKELITAWYIGFLTLILSSFLVYLV). Lys-259 provides a ligand contact to a 1,2-diacyl-sn-glycero-3-phospho-(1D-myo-inositol-4,5-bisphosphate). The Extracellular segment spans residues 283 to 302 (EKDVPEVDAQGEEMKEEFET). Positions 303–315 (YADALWWGLITLA) form an intramembrane region, pore-forming. Residues 316-321 (TIGYGD) carry the Selectivity filter motif. The Extracellular portion of the chain corresponds to 316–326 (TIGYGDKTPKT). A helical transmembrane segment spans residues 327–353 (WEGRLIAATFSLIGVSFFALPAGILGS). Residues 354-872 (GLALKVQEQH…SVWTPSNKPI (519 aa)) are Cytoplasmic-facing. The mediates interaction with calmodulin stretch occupies residues 356 to 537 (ALKVQEQHRQ…RLYKKKFKET (182 aa)). Lys-366 provides a ligand contact to a 1,2-diacyl-sn-glycero-3-phospho-(1D-myo-inositol-4,5-bisphosphate). Disordered regions lie at residues 575 to 611 (GPPS…PSTS) and 764 to 872 (ADLQ…NKPI). Polar residues-rich tracts occupy residues 587-600 (KGSA…QSPR) and 843-872 (DPFT…NKPI).

Belongs to the potassium channel family. KQT (TC 1.A.1.15) subfamily. Kv7.3/KCNQ3 sub-subfamily. Heterotetramer with KCNQ2; forms heterotetrameric native M-channel responsible for the M-current. Interacts with calmodulin; the interaction is calcium-independent, constitutive and participates in the proper assembly of a functional M-channel. Heteromultimer with KCNQ5. May associate with KCNE2. Interacts with IQCJ-SCHIP1. Interacts (via the pore module) with SLC5A3/SMIT1; forms a coregulatory complex that alters ion selectivity, voltage dependence and gating kinetics of the channel. Post-translationally, KCNQ2/KCNQ3 are ubiquitinated by NEDD4L. Ubiquitination leads to protein degradation. Degradation induced by NEDD4L is inhibited by USP36. As to expression, predominantly expressed in brain.

The protein resides in the cell membrane. It carries out the reaction K(+)(in) = K(+)(out). The enzyme catalyses Rb(+)(in) = Rb(+)(out). The catalysed reaction is Cs(+)(in) = Cs(+)(out). It catalyses the reaction Na(+)(in) = Na(+)(out). With respect to regulation, phosphatidylinositol-4,5-bisphosphate (PIP2) potentiates the activation of KCNQ channels by enhancing the electro-mechanical coupling of the voltage-sensing domain (VSD) and the pore-forming domain (PD). In the closed state of the channel, PIP2 is anchored at the S2-S3 loop; upon channel activation, PIP2 interacts with the S4-S5 linker and is involved in channel gating. Calcium suppresses KCNQ2-KCNQ3 channel currents, with calcium-bound calmodulin inducing a change in channel configuration which leads to the reduction of channel affinity for PIP2 and subsequent current suppression. M-channel is activated by the anticonvulsant retigabine. In terms of biological role, pore-forming subunit of the voltage-gated potassium (Kv) M-channel which is responsible for the M-current, a key controller of neuronal excitability. M-channel is composed of pore-forming subunits KCNQ2 and KCNQ3 assembled as heterotetramers. The native M-current has a slowly activating and deactivating potassium conductance which plays a critical role in determining the subthreshold electrical excitability of neurons as well as the responsiveness to synaptic inputs. M-channel is selectively permeable in vitro to other cations besides potassium, in decreasing order of affinity K(+) &gt; Rb(+) &gt; Cs(+) &gt; Na(+). M-channel association with SLC5A3/SMIT1 alters channel ion selectivity, increasing Na(+) and Cs(+) permeation relative to K(+). Suppressed by activation of M1 muscarinic acetylcholine receptors. KCNQ3 also associates with KCNQ5 to form a functional channel in vitro and may also contribute to the M-current in brain. The polypeptide is Potassium voltage-gated channel subfamily KQT member 3 (Homo sapiens (Human)).